The sequence spans 717 residues: Trimethylamine N-oxide transport system permease protein TmoV (717 aa).

A run of 17 helical transmembrane segments spans residues 10 to 30 (FFQWLFLLIVFFSLCFAIEVP), 69 to 89 (LPPLLGWLPIWINDSLFFLMN), 120 to 140 (FMTFLIELIREILLGGVETIV), 153 to 173 (WAELPGLPWTIVTAGAVILGY), 175 to 195 (LSGKGLALFAGLVMIYISVFG), 206 to 226 (FILVAAPLSFLFGLTFGVMAF), 238 to 258 (ILLVMQTMPQYAVLVPAIVLF), 265 to 285 (AVIITMVVAVPPMILLTLLGL), 319 to 339 (ILIGVNQVIMVCFSMAVISAF), 355 to 375 (QLNIGLALEAGLCISLIAILL), 402 to 422 (ILFFAAAVILGIIFSYLGSFY), 452 to 472 (IWDTFFHTLKIFNTWLIVDVL), 488 to 508 (LVLVIGAGYIIGGIRSALVVG), 527 to 547 (LYMATFGVFISTIIGFTVGII), 574 to 594 (LIPVMMLFGVTDTSVLIAVIV), 643 to 663 (MLGLNQTIVFALFMVIIGAFI), and 683 to 703 (GIGLTLGLCVAFIGLIFDHLI). The ABC transmembrane type-1 1 domain occupies 200-379 (SMQTLSFILV…LIAILLDKMS (180 aa)). An ABC transmembrane type-1 2 domain is found at 523-703 (ALVTLYMATF…FIGLIFDHLI (181 aa)).

This sequence belongs to the binding-protein-dependent transport system permease family. In terms of assembly, the complex is probably composed of two ATP-binding proteins (TmoW), two transmembrane proteins (TmoV) and a solute-binding protein (TmoX).

Its subcellular location is the cell inner membrane. Part of the ABC transporter complex TmoXWV involved in trimethylamine N-oxide (TMAO) import. Responsible for the translocation of the substrate across the membrane. This Pelagibacter ubique (strain HTCC1062) protein is Trimethylamine N-oxide transport system permease protein TmoV.